A 507-amino-acid chain; its full sequence is ATP synthase subunit alpha, chloroplastic (507 aa).

Residue 170–177 coordinates ATP; the sequence is GDRQTGKT.

The protein belongs to the ATPase alpha/beta chains family. In terms of assembly, F-type ATPases have 2 components, CF(1) - the catalytic core - and CF(0) - the membrane proton channel. CF(1) has five subunits: alpha(3), beta(3), gamma(1), delta(1), epsilon(1). CF(0) has four main subunits: a, b, b' and c.

The protein resides in the plastid. Its subcellular location is the chloroplast thylakoid membrane. It catalyses the reaction ATP + H2O + 4 H(+)(in) = ADP + phosphate + 5 H(+)(out). Produces ATP from ADP in the presence of a proton gradient across the membrane. The alpha chain is a regulatory subunit. In Marchantia polymorpha (Common liverwort), this protein is ATP synthase subunit alpha, chloroplastic.